The chain runs to 309 residues: Olfactory receptor 2AP1 (309 aa).

Residues 1-23 lie on the Extracellular side of the membrane; that stretch reads MKNKTVLTEFILLGLTDVPELQV. Asparagine 3 carries an N-linked (GlcNAc...) asparagine glycan. Residues 24 to 47 traverse the membrane as a helical segment; it reads AVFTFLFLAYLLSILGNLTILILT. Topologically, residues 48-55 are cytoplasmic; sequence LLDSHLQT. Residues 56-77 traverse the membrane as a helical segment; the sequence is PMYFFLRNFSFLEISFTNIFIP. At 78–98 the chain is on the extracellular side; sequence RVLISITTGNKSISFAGCFTQ. Residue asparagine 87 is glycosylated (N-linked (GlcNAc...) asparagine). Residues cysteine 95 and cysteine 187 are joined by a disulfide bond. The helical transmembrane segment at 99–118 threads the bilayer; the sequence is YFFAMFLGATEFYLLAAMSY. The Cytoplasmic segment spans residues 119–137; it reads DRYVAICKPLHYTTIMSSR. Residues 138 to 156 form a helical membrane-spanning segment; it reads ICIQLIFCSWLGGLMAIIP. Residues 157 to 193 are Extracellular-facing; the sequence is TITLMSQQDFCASNRLNHYFCDYEPLLELSCSDTSLI. A helical transmembrane segment spans residues 194–217; it reads EKVVFLVASVTLVVTLVLVILSYA. At 218 to 234 the chain is on the cytoplasmic side; it reads FIIKTILKLPSAQQRTK. The chain crosses the membrane as a helical span at residues 235 to 257; that stretch reads AFSTCSSHMIVISLSYGSCMFMY. Residues 258-270 are Extracellular-facing; that stretch reads INPSAKEGDTFNK. A helical membrane pass occupies residues 271–290; that stretch reads GVALLITSVAPLLNPFIYTL. At 291-309 the chain is on the cytoplasmic side; it reads RNQQVKQPFKDMVKKLLNL.

Belongs to the G-protein coupled receptor 1 family.

Its subcellular location is the cell membrane. Functionally, odorant receptor. This chain is Olfactory receptor 2AP1 (OR2AP1), found in Homo sapiens (Human).